Here is a 139-residue protein sequence, read N- to C-terminus: 6,7-dimethyl-8-ribityllumazine synthase (139 aa).

Residues Phe11, 42–44, and 66–68 contribute to the 5-amino-6-(D-ribitylamino)uracil site; these read ALE and VVI. 71-72 contributes to the (2S)-2-hydroxy-3-oxobutyl phosphate binding site; sequence ET. His74 (proton donor) is an active-site residue. Asn98 lines the 5-amino-6-(D-ribitylamino)uracil pocket. Arg112 serves as a coordination point for (2S)-2-hydroxy-3-oxobutyl phosphate.

This sequence belongs to the DMRL synthase family.

The catalysed reaction is (2S)-2-hydroxy-3-oxobutyl phosphate + 5-amino-6-(D-ribitylamino)uracil = 6,7-dimethyl-8-(1-D-ribityl)lumazine + phosphate + 2 H2O + H(+). It functions in the pathway cofactor biosynthesis; riboflavin biosynthesis; riboflavin from 2-hydroxy-3-oxobutyl phosphate and 5-amino-6-(D-ribitylamino)uracil: step 1/2. Catalyzes the formation of 6,7-dimethyl-8-ribityllumazine by condensation of 5-amino-6-(D-ribitylamino)uracil with 3,4-dihydroxy-2-butanone 4-phosphate. This is the penultimate step in the biosynthesis of riboflavin. In Novosphingobium aromaticivorans (strain ATCC 700278 / DSM 12444 / CCUG 56034 / CIP 105152 / NBRC 16084 / F199), this protein is 6,7-dimethyl-8-ribityllumazine synthase.